Here is a 230-residue protein sequence, read N- to C-terminus: 7-cyano-7-deazaguanine synthase (230 aa).

16–26 (LSGGLDSATVV) is a binding site for ATP. Residues Cys-195, Cys-205, Cys-208, and Cys-211 each contribute to the Zn(2+) site.

Belongs to the QueC family. The cofactor is Zn(2+).

The enzyme catalyses 7-carboxy-7-deazaguanine + NH4(+) + ATP = 7-cyano-7-deazaguanine + ADP + phosphate + H2O + H(+). It participates in purine metabolism; 7-cyano-7-deazaguanine biosynthesis. Functionally, catalyzes the ATP-dependent conversion of 7-carboxy-7-deazaguanine (CDG) to 7-cyano-7-deazaguanine (preQ(0)). In Pseudomonas fluorescens (strain Pf0-1), this protein is 7-cyano-7-deazaguanine synthase.